Here is a 312-residue protein sequence, read N- to C-terminus: MESALPAAGFLYWVGAGTVAYLALRISYSLFTALRVWGVGNEAGVGPGLGEWAVVTGGTDGIGKSYAEELAKRGMKVVLISRSQDKLDQVSSEIKEKFKVETRTIAVDFTLEDIYDKIKTGLAGLEIGILVNNVGMSYEYPEYFLDVPDLDNVIKKMININILSVCKMTQLVLPGMVERSKGAILNISSGSGMFPVPLLTIYSATKTFVDFFSQCLHEEYRSKGIFVQSVLPYFVATKLAKIRKPTLDKPTPETFVKSAIKTVGLQSRTNGYLIHVLMGWIISNLPSWIYLKIAMNMNKATRVHYLKKIKKN.

A helical transmembrane segment spans residues 4 to 24; the sequence is ALPAAGFLYWVGAGTVAYLAL. Residue 50 to 79 participates in NADP(+) binding; the sequence is GEWAVVTGGTDGIGKSYAEELAKRGMKVVL. 2 helical membrane passes run 182–202 and 271–291; these read GAIL…LTIY and GYLI…WIYL. Serine 189 provides a ligand contact to substrate. The active-site Proton acceptor is tyrosine 202. The Di-lysine motif signature appears at 308–312; the sequence is KIKKN.

Belongs to the short-chain dehydrogenases/reductases (SDR) family. 17-beta-HSD 3 subfamily.

It is found in the endoplasmic reticulum membrane. The catalysed reaction is a very-long-chain (3R)-3-hydroxyacyl-CoA + NADP(+) = a very-long-chain 3-oxoacyl-CoA + NADPH + H(+). The enzyme catalyses 17beta-estradiol + NAD(+) = estrone + NADH + H(+). It catalyses the reaction 17beta-estradiol + NADP(+) = estrone + NADPH + H(+). It carries out the reaction 3-oxooctadecanoyl-CoA + NADPH + H(+) = (3R)-hydroxyoctadecanoyl-CoA + NADP(+). The catalysed reaction is (7Z,10Z,13Z,16Z)-3-oxodocosatetraenoyl-CoA + NADPH + H(+) = (3R)-hydroxy-(7Z,10Z,13Z,16Z)-docosatetraenoyl-CoA + NADP(+). The enzyme catalyses 3-oxo-(7Z,10Z,13Z,16Z,19Z)-docosapentaenoyl-CoA + NADPH + H(+) = (3R)-hydroxy-(7Z,10Z,13Z,16Z,19Z)-docosapentaenoyl-CoA + NADP(+). It catalyses the reaction (8Z,11Z,14Z)-3-oxoeicosatrienoyl-CoA + NADPH + H(+) = (3R)-hydroxy-(8Z,11Z,14Z)-eicosatrienoyl-CoA + NADP(+). It functions in the pathway lipid metabolism; fatty acid biosynthesis. The protein operates within steroid biosynthesis; estrogen biosynthesis. Functionally, catalyzes the second of the four reactions of the long-chain fatty acids elongation cycle. This endoplasmic reticulum-bound enzymatic process, allows the addition of two carbons to the chain of long- and very long-chain fatty acids/VLCFAs per cycle. This enzyme has a 3-ketoacyl-CoA reductase activity, reducing 3-ketoacyl-CoA to 3-hydroxyacyl-CoA, within each cycle of fatty acid elongation. Thereby, it may participate in the production of VLCFAs of different chain lengths that are involved in multiple biological processes as precursors of membrane lipids and lipid mediators. May also catalyze the transformation of estrone (E1) into estradiol (E2) and play a role in estrogen formation. The chain is Very-long-chain 3-oxoacyl-CoA reductase (HSD17B12) from Macaca fascicularis (Crab-eating macaque).